The primary structure comprises 129 residues: HTH-type transcriptional regulator GlnR (129 aa).

One can recognise an HTH merR-type domain in the interval 10-78 (LFPIGIVMDL…MAGIKQVLLM (69 aa)). Positions 13–32 (IGIVMDLTQLSARQIRYYEE) form a DNA-binding region, H-T-H motif.

As to quaternary structure, homodimer under conditions of nitrogen excess. Monomer under conditions of nitrogen-limited. Interacts with feedback-inhibited GlnA in order to stabilizes GlnR-DNA complex.

With respect to regulation, under conditions of nitrogen excess, the DNA binding activity of GlnR is activated by a transient interaction with feedback-inhibited GlnA. Under conditions of nitrogen-limited, GlnR is autoinhibited by its C-terminal region. In terms of biological role, transcription repressor during nitrogen excess. On the contrary of the MerR members, which require longer DNA sites for high-affinity binding, GlnR requires a DNA sequence of 17 nucleotides as minimal binding site. The protein is HTH-type transcriptional regulator GlnR of Bacillus anthracis.